A 123-amino-acid polypeptide reads, in one-letter code: Small ribosomal subunit protein uS13c (123 aa).

Residues 90–123 (GKRHRNNLPVRGQRTRTNARSRRGSKKTVTGKKK) are disordered. A compositionally biased stretch (basic residues) spans 102–123 (QRTRTNARSRRGSKKTVTGKKK).

The protein belongs to the universal ribosomal protein uS13 family. In terms of assembly, part of the 30S ribosomal subunit.

The protein resides in the plastid. The protein localises to the chloroplast. In terms of biological role, located at the top of the head of the 30S subunit, it contacts several helices of the 16S rRNA. This is Small ribosomal subunit protein uS13c from Trieres chinensis (Marine centric diatom).